A 460-amino-acid polypeptide reads, in one-letter code: Ankyrin repeat and MYND domain-containing protein 2 (460 aa).

ANK repeat units follow at residues 45–74, 79–108, and 159–188; these read HGMT…DVNC, HGYT…ETDV, and KLAG…NPLL. Zn(2+) contacts are provided by Cys320, Cys323, Cys332, Cys335, Cys341, Cys345, His353, and Cys357. The MYND-type zinc-finger motif lies at 320-357; sequence CTTCGEKGADKRCSVCKVVMYCDQNCQKTHWFTHKKVC. Basic and acidic residues-rich tracts occupy residues 371-387 and 425-436; these read AAKE…KDEA and ELTKEPEARAPR. The disordered stretch occupies residues 371–460; the sequence is AAKEKRRQEK…ALQKIQDSEE (90 aa).

The protein localises to the cell projection. It is found in the cilium. May be involved in the trafficking of signaling proteins to the cilia. This Gallus gallus (Chicken) protein is Ankyrin repeat and MYND domain-containing protein 2 (ANKMY2).